A 586-amino-acid polypeptide reads, in one-letter code: Aspartate--tRNA(Asp/Asn) ligase (586 aa).

E176 is an L-aspartate binding site. Residues 200 to 203 form an aspartate region; sequence QIFK. R222 is a binding site for L-aspartate. ATP-binding positions include 222-224 and Q231; that span reads RDE. Position 449 (H449) interacts with L-aspartate. Position 483 (E483) interacts with ATP. L-aspartate is bound at residue R490. 535–538 serves as a coordination point for ATP; the sequence is GIDR.

It belongs to the class-II aminoacyl-tRNA synthetase family. Type 1 subfamily. In terms of assembly, homodimer.

Its subcellular location is the cytoplasm. It catalyses the reaction tRNA(Asx) + L-aspartate + ATP = L-aspartyl-tRNA(Asx) + AMP + diphosphate. Aspartyl-tRNA synthetase with relaxed tRNA specificity since it is able to aspartylate not only its cognate tRNA(Asp) but also tRNA(Asn). Reaction proceeds in two steps: L-aspartate is first activated by ATP to form Asp-AMP and then transferred to the acceptor end of tRNA(Asp/Asn). This is Aspartate--tRNA(Asp/Asn) ligase from Brachyspira hyodysenteriae (strain ATCC 49526 / WA1).